The sequence spans 77 residues: Defensin-like protein 159 (77 aa).

Positions 1-27 are cleaved as a signal peptide; sequence MAKLSCSYFLVLILVFSAFLMVERAEG. Cystine bridges form between Cys30-Cys77, Cys40-Cys59, Cys45-Cys71, and Cys49-Cys73.

This sequence belongs to the DEFL family.

The protein resides in the secreted. The sequence is that of Defensin-like protein 159 (LCR25) from Arabidopsis thaliana (Mouse-ear cress).